We begin with the raw amino-acid sequence, 446 residues long: Trigger factor (446 aa).

Positions 161–246 constitute a PPIase FKBP-type domain; sequence GDRLTIDFKG…VSKVERSELP (86 aa). A disordered region spans residues 422 to 446; sequence VSYEDAVKPRTAPAEQAEDGEQSAE. Positions 437–446 are enriched in acidic residues; the sequence is QAEDGEQSAE.

This sequence belongs to the FKBP-type PPIase family. Tig subfamily.

Its subcellular location is the cytoplasm. It carries out the reaction [protein]-peptidylproline (omega=180) = [protein]-peptidylproline (omega=0). Its function is as follows. Involved in protein export. Acts as a chaperone by maintaining the newly synthesized protein in an open conformation. Functions as a peptidyl-prolyl cis-trans isomerase. The polypeptide is Trigger factor (Hahella chejuensis (strain KCTC 2396)).